A 212-amino-acid polypeptide reads, in one-letter code: Putative tyrosine-protein phosphatase OCA1 (212 aa).

The segment at 1–27 (MSNKDTSILKGNVDHEEADSNPKLRKI) is disordered. The segment covering 12–22 (NVDHEEADSNP) has biased composition (basic and acidic residues). The Tyrosine-protein phosphatase domain occupies 40-208 (NFCPVERQLY…SVEIDPSKVP (169 aa)). C146 (phosphocysteine intermediate) is an active-site residue.

Belongs to the protein-tyrosine phosphatase family.

The protein localises to the cytoplasm. It catalyses the reaction O-phospho-L-tyrosyl-[protein] + H2O = L-tyrosyl-[protein] + phosphate. Putative tyrosine-protein phosphatase required for protection against superoxide stress. This Scheffersomyces stipitis (strain ATCC 58785 / CBS 6054 / NBRC 10063 / NRRL Y-11545) (Yeast) protein is Putative tyrosine-protein phosphatase OCA1 (OCA1).